The primary structure comprises 283 residues: Pantothenate synthetase (283 aa).

30–37 contacts ATP; the sequence is MGYLHEGH. Residue histidine 37 is the Proton donor of the active site. Position 61 (glutamine 61) interacts with (R)-pantoate. Glutamine 61 lines the beta-alanine pocket. An ATP-binding site is contributed by 147–150; it reads GQKD. Glutamine 153 is a (R)-pantoate binding site. Residues valine 176 and 184–187 each bind ATP; that span reads MSSR.

This sequence belongs to the pantothenate synthetase family. Homodimer.

It localises to the cytoplasm. The enzyme catalyses (R)-pantoate + beta-alanine + ATP = (R)-pantothenate + AMP + diphosphate + H(+). The protein operates within cofactor biosynthesis; (R)-pantothenate biosynthesis; (R)-pantothenate from (R)-pantoate and beta-alanine: step 1/1. Catalyzes the condensation of pantoate with beta-alanine in an ATP-dependent reaction via a pantoyl-adenylate intermediate. This is Pantothenate synthetase from Thermoanaerobacter sp. (strain X514).